Consider the following 541-residue polypeptide: MFQDKGWVLLTLITLVSPSWAAYKLQERYSWNQLDFAFPNARLKEQALASGDYIPQNGLPVGVEHFGNRLFVTVPRWRDGIPATLTYINMDRSLTGSPELIPYPDWRSNTAGDCANSITTAYRIKVDECGRLWVLDTGTVGIGNTTTNPCPYAVNVFDLTTDTRIRRYELPAVDTNPNTFIANIAVDIGKNCDDAYAYFADELGYGLIAYSWEQDKSWRFSAHSYFFPDPLRGDFNVAGINFQWGEEGIFGMSLSPIRSDGYRTLYFSPLASHRQFAVSTRILRDETRTEDSYHDFVALDERGPNSHTTSRVMSDDGIELFNLIDQNAVGCWHSSMPYSPQFHGIVDRDDVGLVFPADVKIDENKNVWVLSDRMPVFLLSDLDYSDTNFRIYTAPLATLIDNTVCDLRNNAYGPPNTVSIPKQTVLPVGPPLYTKQYRPVLPQKPQTSWASSPPPPSRTYLPANSGNVVSSISVSTNTVGPAGVEVPKAYIFNQHNGINYETSGPHLFPTLQPAQPAGQDGGLKTYVNARQSGWWHHQHQG.

Residues methionine 1–alanine 21 form the signal peptide. N-linked (GlcNAc...) asparagine glycosylation is present at asparagine 144.

It belongs to the major royal jelly protein family.

The protein localises to the secreted. In terms of biological role, controls the pigmentation pattern of the adult cuticle and larval mouth parts. In Drosophila yakuba (Fruit fly), this protein is Protein yellow (y).